We begin with the raw amino-acid sequence, 384 residues long: Tryptophan--tRNA ligase (384 aa).

The 'HIGH' region motif lies at 81 to 89; that stretch reads PSGPMHIGH. The 'KMSKS' region motif lies at 252 to 256; it reads KMSAS.

It belongs to the class-I aminoacyl-tRNA synthetase family.

The protein resides in the cytoplasm. It carries out the reaction tRNA(Trp) + L-tryptophan + ATP = L-tryptophyl-tRNA(Trp) + AMP + diphosphate + H(+). The polypeptide is Tryptophan--tRNA ligase (Thermococcus sibiricus (strain DSM 12597 / MM 739)).